Reading from the N-terminus, the 474-residue chain is tRNA-2-methylthio-N(6)-dimethylallyladenosine synthase (474 aa).

The 118-residue stretch at 3–120 (KKLHIKTWGC…LPEMIDQVQR (118 aa)) folds into the MTTase N-terminal domain. Cys-12, Cys-49, Cys-83, Cys-157, Cys-161, and Cys-164 together coordinate [4Fe-4S] cluster. The Radical SAM core domain occupies 143–375 (RADGPTAFVS…QDRITQQAMR (233 aa)). Positions 378-441 (RQMLGTVQRI…TNSLRGIFIR (64 aa)) constitute a TRAM domain.

It belongs to the methylthiotransferase family. MiaB subfamily. Monomer. [4Fe-4S] cluster serves as cofactor.

Its subcellular location is the cytoplasm. It carries out the reaction N(6)-dimethylallyladenosine(37) in tRNA + (sulfur carrier)-SH + AH2 + 2 S-adenosyl-L-methionine = 2-methylsulfanyl-N(6)-dimethylallyladenosine(37) in tRNA + (sulfur carrier)-H + 5'-deoxyadenosine + L-methionine + A + S-adenosyl-L-homocysteine + 2 H(+). Functionally, catalyzes the methylthiolation of N6-(dimethylallyl)adenosine (i(6)A), leading to the formation of 2-methylthio-N6-(dimethylallyl)adenosine (ms(2)i(6)A) at position 37 in tRNAs that read codons beginning with uridine. This Shewanella denitrificans (strain OS217 / ATCC BAA-1090 / DSM 15013) protein is tRNA-2-methylthio-N(6)-dimethylallyladenosine synthase.